The primary structure comprises 929 residues: Synaptopodin (929 aa).

M1 is modified (N-acetylmethionine). Residues M1–A12 show a composition bias toward pro residues. The interval M1–K260 is disordered. Basic and acidic residues-rich tracts occupy residues G60 to A69 and S91 to V110. The residue at position 140 (S140) is a Phosphoserine. A compositionally biased stretch (basic and acidic residues) spans T142–A151. Residues R152–G170 are compositionally biased toward polar residues. S207 carries the phosphoserine modification. Positions E224–Q234 are enriched in pro residues. Residue S263 is modified to Phosphoserine. Residues G285–A389 are disordered. Residues L317–S332 show a composition bias toward low complexity. The N-linked (GlcNAc...) asparagine glycan is linked to N330. Polar residues predominate over residues H333 to S379. 2 positions are modified to phosphoserine: S501 and S525. Residues F509 to N558 are disordered. The residue at position 560 (T560) is a Phosphothreonine. Residues P562–Y565 carry the PPxY motif motif. S580 is subject to Phosphoserine. A PPxY motif motif is present at residues P581–Y584. Disordered stretches follow at residues P589–I610 and K630–E726. Residues A646–G656 show a composition bias toward basic and acidic residues. S685, S702, and Y738 each carry phosphoserine. The segment covering S685–S698 has biased composition (low complexity). The disordered stretch occupies residues I740–W763. T746 carries the post-translational modification Phosphothreonine. S754, S758, and S779 each carry phosphoserine. Residue T783 is modified to Phosphothreonine. Residues P784, T804, R812, K826, S833, S854, P871, and P894 each carry the phosphoserine modification. The span at K826–S839 shows a compositional bias: low complexity. Positions K826–G916 are disordered. Residues G866–A880 show a composition bias toward polar residues.

It belongs to the synaptopodin family. In terms of assembly, interacts with BAIAP1. Interacts with actin. Interacts (via PPxY motifs) with WWC1 (via WW domains). In terms of processing, O-glycosylated. Expressed in cerebral cortex.

The protein localises to the cytoplasm. It is found in the cytoskeleton. It localises to the cell junction. Its subcellular location is the tight junction. The protein resides in the perikaryon. The protein localises to the cell projection. It is found in the dendritic spine. It localises to the postsynaptic density. Its subcellular location is the synapse. The protein resides in the cytosol. Its function is as follows. Actin-associated protein that may play a role in modulating actin-based shape and motility of dendritic spines and renal podocyte foot processes. Seems to be essential for the formation of spine apparatuses in spines of telencephalic neurons, which is involved in synaptic plasticity. The polypeptide is Synaptopodin (SYNPO) (Homo sapiens (Human)).